A 355-amino-acid chain; its full sequence is Oligopeptide transport ATP-binding protein AmiE (355 aa).

Positions 9–260 constitute an ABC transporter domain; that stretch reads LTARDIVVEF…PRHPYTWSLL (252 aa). 45-52 contacts ATP; that stretch reads GESGSGKS.

This sequence belongs to the ABC transporter superfamily.

It is found in the cell membrane. In terms of biological role, part of the binding-protein-dependent transport system for oligopeptides. Probably responsible for energy coupling to the transport system. This chain is Oligopeptide transport ATP-binding protein AmiE (amiE), found in Streptococcus pneumoniae serotype 4 (strain ATCC BAA-334 / TIGR4).